A 155-amino-acid chain; its full sequence is MSHYEGDLRTPESARFAILASRWNARITDTLVAGARQSLAGNGIAEANIDVIRVPGAWELPLVAARLAAAHEHAAILTLGCVIRGDTRHYEHVADRCAEGLMRVQLDFGVPVLNGVLAVERVEDAEARAGGSHGNKGEEVALAALEMVNLLEQLP.

5-amino-6-(D-ribitylamino)uracil-binding positions include Trp-23, 57–59, and 81–83; these read AWE and CVI. 86-87 serves as a coordination point for (2S)-2-hydroxy-3-oxobutyl phosphate; that stretch reads DT. His-89 serves as the catalytic Proton donor. Asn-114 provides a ligand contact to 5-amino-6-(D-ribitylamino)uracil. Arg-128 is a (2S)-2-hydroxy-3-oxobutyl phosphate binding site.

Belongs to the DMRL synthase family. As to quaternary structure, forms an icosahedral capsid composed of 60 subunits, arranged as a dodecamer of pentamers.

The catalysed reaction is (2S)-2-hydroxy-3-oxobutyl phosphate + 5-amino-6-(D-ribitylamino)uracil = 6,7-dimethyl-8-(1-D-ribityl)lumazine + phosphate + 2 H2O + H(+). The protein operates within cofactor biosynthesis; riboflavin biosynthesis; riboflavin from 2-hydroxy-3-oxobutyl phosphate and 5-amino-6-(D-ribitylamino)uracil: step 1/2. Its function is as follows. Catalyzes the formation of 6,7-dimethyl-8-ribityllumazine by condensation of 5-amino-6-(D-ribitylamino)uracil with 3,4-dihydroxy-2-butanone 4-phosphate. This is the penultimate step in the biosynthesis of riboflavin. This chain is 6,7-dimethyl-8-ribityllumazine synthase, found in Stenotrophomonas maltophilia (strain K279a).